Consider the following 542-residue polypeptide: Chaperonin GroEL 2 (542 aa).

ATP-binding positions include 30–33 (TLGP), lysine 51, 87–91 (DGTTT), glycine 415, and aspartate 496.

This sequence belongs to the chaperonin (HSP60) family. In terms of assembly, forms a cylinder of 14 subunits composed of two heptameric rings stacked back-to-back. Interacts with the co-chaperonin GroES.

The protein localises to the cytoplasm. It carries out the reaction ATP + H2O + a folded polypeptide = ADP + phosphate + an unfolded polypeptide.. Its function is as follows. Together with its co-chaperonin GroES, plays an essential role in assisting protein folding. The GroEL-GroES system forms a nano-cage that allows encapsulation of the non-native substrate proteins and provides a physical environment optimized to promote and accelerate protein folding. This is Chaperonin GroEL 2 from Mesorhizobium japonicum (strain LMG 29417 / CECT 9101 / MAFF 303099) (Mesorhizobium loti (strain MAFF 303099)).